Consider the following 415-residue polypeptide: MEELSMANTMFALNLLKQIEKSNSTQNIFISPWSISSTLAIVLLGAGGNTEQQMAKVLQFNEIGSYGITTRNPENFSGCDFAQQIQKENYPSAILQAQAGDKIHSAFSSLSSTINTPQGDYLLESANKLFGEKSARFKEEYIQLSKKYYSTEPEAVDFLECAEEAREKINSWVKTQTKGEIPNLLPEGSVDEDTKMVLVNAVYFKGKWKTPFEKKLNGLYPFRVNSHESIPVQMMFLHAKLNIGYIKDLKTQILELPHTGNISMLLLLPDEIEDASTGLELLESEINFANFNKWISKDTLDEDDVVVYIPKFKLAQSYELKSILQSMGMEDAFNKGKANFSGMSERNDLFLSEVFHQASVDVTEEGTVAAGGTGAVMTGRTGHGGPQFVADHPFLFFIMDKITHTILFVGRFSSP.

N-linked (GlcNAc...) asparagine glycosylation is found at Asn23, Asn75, Asn261, and Asn339.

This sequence belongs to the serpin family. Ov-serpin subfamily. In terms of assembly, interacts with PSMB1. Post-translationally, the signal sequence is not cleaved.

Its subcellular location is the cytoplasm. It is found in the secreted. The protein localises to the extracellular space. Functionally, inhibits urokinase-type plasminogen activator. The monocyte derived PAI-2 is distinct from the endothelial cell-derived PAI-1. Not required for normal murine development or survival. The protein is Plasminogen activator inhibitor 2, macrophage (Serpinb2) of Mus musculus (Mouse).